A 492-amino-acid chain; its full sequence is GPI alpha-1,6-mannosyltransferase 2 (492 aa).

The Cytoplasmic segment spans residues 1 to 13 (MGLLDPSQKEVLK). The chain crosses the membrane as a helical span at residues 14 to 34 (FAVSCRILTLVLQALFNIIIP). At 35–77 (DHHADAFSPPRLAPSGSVDQLVEALLGGLSRWDAEHFLFIAEH) the chain is on the lumenal side. The chain crosses the membrane as a helical span at residues 78 to 98 (GYLYEHNFAFFPGFPLALLMG). Topologically, residues 99–113 (TELLRPLQGLLSERS) are cytoplasmic. The chain crosses the membrane as a helical span at residues 114-134 (CLLVSVALLNSLFSVLAAVAL). At 135-136 (HD) the chain is on the lumenal side. Residues 137–157 (LGCLVLHCPRQAFCAALLFCL) form a helical membrane-spanning segment. The Cytoplasmic portion of the chain corresponds to 158 to 161 (SPAN). The helical transmembrane segment at 162–182 (VFLAAGYSEALFAFLTFSAMG) threads the bilayer. The Lumenal segment spans residues 183 to 192 (QLERGRGWAS). The chain crosses the membrane as a helical span at residues 193 to 213 (GLLFALAAGVRSNGLVSVGFL). Over 214 to 234 (LHSQCRGFCSSLVVLDPLKGL) the chain is Cytoplasmic. Residues 235-255 (VKLMASLCLSVLTVSLPFALF) traverse the membrane as a helical segment. Residues 256–327 (QYYAYTQFCF…RYYELRQVPN (72 aa)) are Lumenal-facing. The helical transmembrane segment at 328–348 (FLLATPVTVLVVWATWTYVTA) threads the bilayer. At 349 to 378 (HPWLCLTLGLQRTKDRESLEKPHPGFLSAK) the chain is on the cytoplasmic side. A helical transmembrane segment spans residues 379 to 399 (VFVYLVHAAALLAFGGLCMHV). At 400–468 (QVLTRLLGSS…NWKTCSPVTK (69 aa)) the chain is on the lumenal side. A helical membrane pass occupies residues 469–489 (CILVYFLTYWLLGLIMHCNFL). At 490-492 (PWT) the chain is on the cytoplasmic side.

Belongs to the PIGV family. Not N-glycosylated.

It localises to the endoplasmic reticulum membrane. It participates in glycolipid biosynthesis; glycosylphosphatidylinositol-anchor biosynthesis. Functionally, alpha-1,6-mannosyltransferase that catalyzes the transfer of the second mannose, via an alpha-1,6 bond, from a dolichol-phosphate-mannose (Dol-P-Man) to the alpha-D-Man-(1-&gt;4)-alpha-D-GlcN-(1-&gt;6)-(1-radyl,2-acyl-sn-glycero-3-phospho)-2-acyl-inositol (also termed H2) intermediate to generate an alpha-D-Man-(1-&gt;6)-alpha-D-Man-(1-&gt;4)-alpha-D-GlcN-(1-&gt;6)-(1-radyl,2-acyl-sn-glycero-3-phospho)-2-acyl-inositol (also termed H3) and participates in the seventh step of the glycosylphosphatidylinositol-anchor biosynthesis. Also transfers the second mannose on a 2-PEtn-alpha-D-Man-(1-&gt;4)-alpha-D-GlcN-(1-&gt;6)-(1-radyl,2-acyl-sn-glycero-3-phospho)-2-acyl-inositol (also termed H5). The protein is GPI alpha-1,6-mannosyltransferase 2 of Rattus norvegicus (Rat).